Here is a 513-residue protein sequence, read N- to C-terminus: Flagellin A (513 aa).

The protein belongs to the bacterial flagellin family. As to quaternary structure, heteromer of FlaA and FlaB. FlaB is located proximal to the hook while the remainder of the filament is composed of the predominant FlaA.

The protein localises to the secreted. It is found in the bacterial flagellum. In terms of biological role, flagellin is the subunit protein which polymerizes to form the filaments of bacterial flagella. Important for motility and virulence. This is Flagellin A (flaA) from Helicobacter felis (strain ATCC 49179 / CCUG 28539 / NCTC 12436 / CS1).